A 296-amino-acid polypeptide reads, in one-letter code: tRNA dimethylallyltransferase (296 aa).

Position 9 to 16 (9 to 16 (GPTAVGKT)) interacts with ATP. 11 to 16 (TAVGKT) serves as a coordination point for substrate. Positions 34–37 (DSRQ) are interaction with substrate tRNA.

This sequence belongs to the IPP transferase family. In terms of assembly, monomer. Mg(2+) is required as a cofactor.

It carries out the reaction adenosine(37) in tRNA + dimethylallyl diphosphate = N(6)-dimethylallyladenosine(37) in tRNA + diphosphate. Its function is as follows. Catalyzes the transfer of a dimethylallyl group onto the adenine at position 37 in tRNAs that read codons beginning with uridine, leading to the formation of N6-(dimethylallyl)adenosine (i(6)A). The polypeptide is tRNA dimethylallyltransferase (Chloroflexus aggregans (strain MD-66 / DSM 9485)).